Consider the following 130-residue polypeptide: Small ribosomal subunit protein uS11 (130 aa).

This sequence belongs to the universal ribosomal protein uS11 family. As to quaternary structure, part of the 30S ribosomal subunit. Interacts with proteins S7 and S18. Binds to IF-3.

Functionally, located on the platform of the 30S subunit, it bridges several disparate RNA helices of the 16S rRNA. Forms part of the Shine-Dalgarno cleft in the 70S ribosome. The chain is Small ribosomal subunit protein uS11 from Shewanella sediminis (strain HAW-EB3).